Here is a 609-residue protein sequence, read N- to C-terminus: MTIKFLSESTINRIAAGEVIERPASVVKELVENAVDAGSTKIDIILERAGKNLIIISDDGIGMTDKELEIAVERHTTSKLDESDFLNIHTFGFRGEALPSIAAISKMLITSKKQGADKAFQIKLIGGNEKQVTVSVHNEGTKIEIRDLFFATPARLKFLRADKTELAATVDVVKKIALAHPEISFSLTHDDRNLLKFKGQNKDAETNLKQRIIDVIGDDFIKNAAYIDFKTPDFSICGYTSIPTYNRASSEDQFLFINNRPVKDKLLQVALRVAYQDYLARDRYPLCAIFLQIDPQLVDVNVHPAKAEVRFHDPNYVRNLLIEAIKNALTNKSHVTSTTIASDALQLFKNPLVNKQPSVSKAVSVNSKPADYRPAMSPSFKPTPNTACQKLIDTLPHAKIEQEVERRIEHEQQVHKQYKLGAAKAQLHTTYIISQTEDSIVITDQHAAHERLGYEKIKDYLKTEELIKQRLLIPEIVELPNERKADCLYENREKLYKLGLTLEKFGEKSIIVTEIPNILEDVNVQKLIQDLADHLSDFGENIALTELIEHVTETYACHYSIRAGRKLSADEMNALLRQMENTPFSGQCNHGRPTYIELKLKDIERLFGR.

Belongs to the DNA mismatch repair MutL/HexB family.

Its function is as follows. This protein is involved in the repair of mismatches in DNA. It is required for dam-dependent methyl-directed DNA mismatch repair. May act as a 'molecular matchmaker', a protein that promotes the formation of a stable complex between two or more DNA-binding proteins in an ATP-dependent manner without itself being part of a final effector complex. This is DNA mismatch repair protein MutL from Rickettsia felis (strain ATCC VR-1525 / URRWXCal2) (Rickettsia azadi).